The chain runs to 248 residues: MSGHSKWATIKHKKAATDAKRGRAFTRLIKEITIAARNGGDPDGNPRLRSAILAAKNVSMPSDNIKKAIMRGTGELEGGQIEEVMFEGYGPGGAAVLVNVATDNRNRTVSEIRHAFSKNGGNMGEQGSVAWMFERRSQIFVPIEKATEDQLMGIVLDAGGDDLRNDGDQWEVLSDPASHDSVLKALESNGIPVVDPTIAWVPKNLMKLEGKNASGMLRLTEVLEDHDDVQSVYSNFDIDEKELEALSQ.

It belongs to the TACO1 family.

It is found in the cytoplasm. The chain is Probable transcriptional regulatory protein Acid_5948 from Solibacter usitatus (strain Ellin6076).